Consider the following 486-residue polypeptide: Pup--protein ligase (486 aa).

A Mg(2+)-binding site is contributed by E33. R76 is a binding site for ATP. Y78 is a Mg(2+) binding site. The active-site Proton acceptor is the D80. Residue E86 participates in Mg(2+) binding. The ATP site is built by T89 and W451.

The protein belongs to the Pup ligase/Pup deamidase family. Pup-conjugating enzyme subfamily.

It carries out the reaction ATP + [prokaryotic ubiquitin-like protein]-L-glutamate + [protein]-L-lysine = ADP + phosphate + N(6)-([prokaryotic ubiquitin-like protein]-gamma-L-glutamyl)-[protein]-L-lysine.. It functions in the pathway protein degradation; proteasomal Pup-dependent pathway. Its pathway is protein modification; protein pupylation. Its function is as follows. Catalyzes the covalent attachment of the prokaryotic ubiquitin-like protein modifier Pup to the proteasomal substrate proteins, thereby targeting them for proteasomal degradation. This tagging system is termed pupylation. The ligation reaction involves the side-chain carboxylate of the C-terminal glutamate of Pup and the side-chain amino group of a substrate lysine. The polypeptide is Pup--protein ligase (Bifidobacterium longum (strain DJO10A)).